The chain runs to 442 residues: tRNA modification GTPase MnmE (442 aa).

3 residues coordinate (6S)-5-formyl-5,6,7,8-tetrahydrofolate: Arg-24, Glu-82, and Lys-122. Positions 219–366 (GFKVALVGEP…LRRALKREIE (148 aa)) constitute a TrmE-type G domain. Residue Asn-229 participates in K(+) binding. Residues 229–234 (NAGKST), 248–254 (TDIAGTT), and 273–276 (DTAG) each bind GTP. Position 233 (Ser-233) interacts with Mg(2+). K(+)-binding residues include Thr-248, Ile-250, and Thr-253. Thr-254 is a binding site for Mg(2+). Residue Lys-442 coordinates (6S)-5-formyl-5,6,7,8-tetrahydrofolate.

The protein belongs to the TRAFAC class TrmE-Era-EngA-EngB-Septin-like GTPase superfamily. TrmE GTPase family. Homodimer. Heterotetramer of two MnmE and two MnmG subunits. Requires K(+) as cofactor.

The protein resides in the cytoplasm. Its function is as follows. Exhibits a very high intrinsic GTPase hydrolysis rate. Involved in the addition of a carboxymethylaminomethyl (cmnm) group at the wobble position (U34) of certain tRNAs, forming tRNA-cmnm(5)s(2)U34. The protein is tRNA modification GTPase MnmE of Agrobacterium fabrum (strain C58 / ATCC 33970) (Agrobacterium tumefaciens (strain C58)).